Here is a 299-residue protein sequence, read N- to C-terminus: Transcription elongation factor A protein 2 (299 aa).

In terms of domain architecture, TFIIS N-terminal spans 6–83 (EEIARIARRL…KSWKKLLDAS (78 aa)). Lys-58 participates in a covalent cross-link: Glycyl lysine isopeptide (Lys-Gly) (interchain with G-Cter in ubiquitin). Phosphoserine occurs at positions 60 and 100. The segment at 86–128 (KARERGRGMPLPTSSRDASEAPDPSRKRPELPRAPSTPRITTF) is disordered. Basic and acidic residues predominate over residues 102-116 (DASEAPDPSRKRPEL). Positions 138-254 (VRNKCREMLT…EHQMARTGGT (117 aa)) constitute a TFIIS central domain. The segment at 257 to 297 (DLFTCGKCRKKNCTYTQVQTRSSDEPMTTFVVCNECGNRWK) adopts a TFIIS-type zinc-finger fold. 4 residues coordinate Zn(2+): Cys-261, Cys-264, Cys-289, and Cys-292.

This sequence belongs to the TFS-II family. As to quaternary structure, interacts with the basal transcription factor GTF2B. Interacts with REXO1. As to expression, testis and ovary specific.

The protein localises to the nucleus. Functionally, necessary for efficient RNA polymerase II transcription elongation past template-encoded arresting sites. The arresting sites in DNA have the property of trapping a certain fraction of elongating RNA polymerases that pass through, resulting in locked ternary complexes. Cleavage of the nascent transcript by S-II allows the resumption of elongation from the new 3'-terminus. This chain is Transcription elongation factor A protein 2 (TCEA2), found in Homo sapiens (Human).